The chain runs to 362 residues: MAHHDPIGLIAPNAGLAQLNERSRDIFRQIVESYLATGEPVGSRNISRLIAVPLSPASVRNVMSDLEQLGLIYAPHTSAGRLPTELGLRFFVDALMQVGDLTEPERQSIQSQLASVGKAQSVEAALEEALTRLSGLTRTAAVVLTAKSNVRLKHIEFVRLEPDKALVVLVAEDGQVENRVLTLPSGVPASALTEASNFLNARIRGRTLAEARLELETALAQSKAELDQLTQKIVAAGIASWSGGDSDDRQLIVRGHANLLEDLHAMEDLERVRLLFDDLETKREVIDLLGRAERADGVRIFIGSENKLFSLSGSSTIIAPYSDGAGHIVGVLGVIGPTRLNYARVIPMVDYAARIVSQMLGR.

It belongs to the HrcA family.

In terms of biological role, negative regulator of class I heat shock genes (grpE-dnaK-dnaJ and groELS operons). Prevents heat-shock induction of these operons. The sequence is that of Heat-inducible transcription repressor HrcA from Nitrobacter winogradskyi (strain ATCC 25391 / DSM 10237 / CIP 104748 / NCIMB 11846 / Nb-255).